We begin with the raw amino-acid sequence, 85 residues long: Cysteine-rich venom protein 1 (85 aa).

An N-terminal signal peptide occupies residues 1–21 (MCRYALIVLVVVVVATNLSEA). Cystine bridges form between cysteine 29-cysteine 63, cysteine 38-cysteine 59, cysteine 42-cysteine 53, cysteine 46-cysteine 84, and cysteine 65-cysteine 78. Residues 29–84 (CEPNRIYKTCGPACPPTCEDPDPDCNETPQCKAGCFCIPGLIENMKGGNCISPSLC) form the TIL domain.

The protein belongs to the serine protease inhibitor-like (TIL domain-containing) family. As to expression, expressed by the venom gland.

The protein localises to the secreted. In terms of biological role, may be a phenoloxidase inhibitor that stabilizes or inhibits venom phenoloxidase while it is stored in the venom sac. In Pimpla hypochondriaca (Parasitoid wasp), this protein is Cysteine-rich venom protein 1.